The primary structure comprises 316 residues: Pantothenate kinase (316 aa).

Residue 95-102 coordinates ATP; the sequence is GSVAVGKS.

This sequence belongs to the prokaryotic pantothenate kinase family.

It is found in the cytoplasm. The enzyme catalyses (R)-pantothenate + ATP = (R)-4'-phosphopantothenate + ADP + H(+). Its pathway is cofactor biosynthesis; coenzyme A biosynthesis; CoA from (R)-pantothenate: step 1/5. In Klebsiella pneumoniae (strain 342), this protein is Pantothenate kinase.